We begin with the raw amino-acid sequence, 359 residues long: 5-amino-6-(D-ribitylamino)uracil--L-tyrosine 4-hydroxyphenyl transferase 1 (359 aa).

The Radical SAM core domain maps to 45 to 282; that stretch reads VTYVVNANIN…VYAISRIFFK (238 aa). The [4Fe-4S] cluster site is built by Cys-59, Cys-63, and Cys-66.

The protein belongs to the radical SAM superfamily. CofH family. In terms of assembly, consists of two subunits, CofG and CofH. [4Fe-4S] cluster is required as a cofactor.

It carries out the reaction 5-amino-6-(D-ribitylamino)uracil + L-tyrosine + S-adenosyl-L-methionine = 5-amino-5-(4-hydroxybenzyl)-6-(D-ribitylimino)-5,6-dihydrouracil + 2-iminoacetate + 5'-deoxyadenosine + L-methionine + H(+). The protein operates within cofactor biosynthesis; coenzyme F0 biosynthesis. Catalyzes the radical-mediated synthesis of 5-amino-5-(4-hydroxybenzyl)-6-(D-ribitylimino)-5,6-dihydrouracil from 5-amino-6-(D-ribitylamino)uracil and L-tyrosine. The sequence is that of 5-amino-6-(D-ribitylamino)uracil--L-tyrosine 4-hydroxyphenyl transferase 1 from Methanococcus maripaludis (strain DSM 14266 / JCM 13030 / NBRC 101832 / S2 / LL).